A 181-amino-acid chain; its full sequence is Inner membrane-spanning protein YciB (181 aa).

5 helical membrane passes run Leu-10–Ile-30, Met-50–Asp-70, Ile-80–Ile-100, Trp-120–Leu-140, and Phe-148–Ile-168.

The protein belongs to the YciB family.

The protein resides in the cell inner membrane. Functionally, plays a role in cell envelope biogenesis, maintenance of cell envelope integrity and membrane homeostasis. The polypeptide is Inner membrane-spanning protein YciB (Vibrio cholerae serotype O1 (strain ATCC 39541 / Classical Ogawa 395 / O395)).